We begin with the raw amino-acid sequence, 118 residues long: uncharacterized protein (118 aa).

The next 3 membrane-spanning stretches (helical) occupy residues 6-26 (ILIL…PFMV), 43-63 (ALSC…IHVL), and 84-104 (IFKV…VLVQ).

It belongs to the AzlD/HI_1737/HP1330 family.

The protein localises to the cell membrane. This is an uncharacterized protein from Helicobacter pylori (strain J99 / ATCC 700824) (Campylobacter pylori J99).